The following is a 198-amino-acid chain: HTH-type transcriptional regulator BetI (198 aa).

The HTH tetR-type domain maps to 8-68; that stretch reads PIRRQQLIDA…ATMRYLISHL (61 aa). The H-T-H motif DNA-binding region spans 31 to 50; the sequence is TIAQIARRAGVSNGIISHYF.

The protein operates within amine and polyamine biosynthesis; betaine biosynthesis via choline pathway [regulation]. Its function is as follows. Repressor involved in the biosynthesis of the osmoprotectant glycine betaine. It represses transcription of the choline transporter BetT and the genes of BetAB involved in the synthesis of glycine betaine. In Serratia proteamaculans (strain 568), this protein is HTH-type transcriptional regulator BetI.